The following is a 333-amino-acid chain: Flap endonuclease 1 (333 aa).

An N-domain region spans residues methionine 1–arginine 99. Residues aspartate 28, aspartate 81, glutamate 153, glutamate 155, aspartate 174, aspartate 176, and aspartate 235 each contribute to the Mg(2+) site. The tract at residues glutamate 117–glycine 256 is I-domain. The interval glycine 325–phenylalanine 333 is interaction with PCNA.

The protein belongs to the XPG/RAD2 endonuclease family. FEN1 subfamily. As to quaternary structure, interacts with PCNA. PCNA stimulates the nuclease activity without altering cleavage specificity. Mg(2+) serves as cofactor.

Structure-specific nuclease with 5'-flap endonuclease and 5'-3' exonuclease activities involved in DNA replication and repair. During DNA replication, cleaves the 5'-overhanging flap structure that is generated by displacement synthesis when DNA polymerase encounters the 5'-end of a downstream Okazaki fragment. Binds the unpaired 3'-DNA end and kinks the DNA to facilitate 5' cleavage specificity. Cleaves one nucleotide into the double-stranded DNA from the junction in flap DNA, leaving a nick for ligation. Also involved in the base excision repair (BER) pathway. Acts as a genome stabilization factor that prevents flaps from equilibrating into structures that lead to duplications and deletions. Also possesses 5'-3' exonuclease activity on nicked or gapped double-stranded DNA. The sequence is that of Flap endonuclease 1 from Methanosphaerula palustris (strain ATCC BAA-1556 / DSM 19958 / E1-9c).